Here is a 253-residue protein sequence, read N- to C-terminus: Tabinhibitin 3 (253 aa).

Residues 1–22 (MTLKRIFCAALALIVLQSVASA) form the signal peptide. The region spanning 66 to 209 (LQKTNWLRGV…LKRALFTCNF (144 aa)) is the SCP domain. The Cell attachment site motif lies at 222–224 (RGD).

It belongs to the CRISP family. As to expression, expressed in salivary glands.

It is found in the secreted. Functionally, inhibits platelet aggregation induced by all agonists tested (ADP, arachidonic acid, the thromboxane A2 analog U46619, thrombin, and snake venom snaclecs (TMVA that activates platelet through GPIB, and stejnulxin that specifically acts through GPVI (GP6))). May act by competing with fibrinogen for binding to glycoprotein IIb/IIIa (ITGA2B/ITGB3). The polypeptide is Tabinhibitin 3 (Tabanus yao (Horsefly)).